A 288-amino-acid polypeptide reads, in one-letter code: Glycine--tRNA ligase alpha subunit (288 aa).

It belongs to the class-II aminoacyl-tRNA synthetase family. Tetramer of two alpha and two beta subunits.

The protein resides in the cytoplasm. It carries out the reaction tRNA(Gly) + glycine + ATP = glycyl-tRNA(Gly) + AMP + diphosphate. The polypeptide is Glycine--tRNA ligase alpha subunit (Desulfatibacillum aliphaticivorans).